The following is a 147-amino-acid chain: 3-dehydroquinate dehydratase (147 aa).

The active-site Proton acceptor is Y25. Positions 76, 82, and 89 each coordinate substrate. H102 (proton donor) is an active-site residue. Residues 103 to 104 (IS) and R113 contribute to the substrate site.

Belongs to the type-II 3-dehydroquinase family. Homododecamer.

The catalysed reaction is 3-dehydroquinate = 3-dehydroshikimate + H2O. Its pathway is metabolic intermediate biosynthesis; chorismate biosynthesis; chorismate from D-erythrose 4-phosphate and phosphoenolpyruvate: step 3/7. Catalyzes a trans-dehydration via an enolate intermediate. The chain is 3-dehydroquinate dehydratase from Mycobacterium tuberculosis (strain ATCC 25177 / H37Ra).